Consider the following 443-residue polypeptide: Glutamyl-tRNA reductase (443 aa).

Substrate is bound by residues 49–52 (TCNR), Ser-109, 114–116 (ETQ), and Gln-120. The active-site Nucleophile is the Cys-50. 189–194 (GAGKMG) provides a ligand contact to NADP(+).

The protein belongs to the glutamyl-tRNA reductase family. Homodimer.

It carries out the reaction (S)-4-amino-5-oxopentanoate + tRNA(Glu) + NADP(+) = L-glutamyl-tRNA(Glu) + NADPH + H(+). It functions in the pathway porphyrin-containing compound metabolism; protoporphyrin-IX biosynthesis; 5-aminolevulinate from L-glutamyl-tRNA(Glu): step 1/2. Its function is as follows. Catalyzes the NADPH-dependent reduction of glutamyl-tRNA(Glu) to glutamate 1-semialdehyde (GSA). The protein is Glutamyl-tRNA reductase of Bacillus mycoides (strain KBAB4) (Bacillus weihenstephanensis).